The chain runs to 586 residues: SPbeta prophage-derived uncharacterized protein YorA (586 aa).

13 PbH1 repeats span residues 108 to 147, 148 to 170, 184 to 206, 207 to 235, 246 to 268, 288 to 313, 320 to 341, 364 to 384, 387 to 410, 411 to 432, 435 to 456, 481 to 504, and 505 to 531; these read AENVIIRGGRIIGDRYQHDYSLIDTDRKTHEWGFGIHVHG, SKNVLIENVQISDCIGDNIWIAA, SKSVTVRKCELKRGRRNNLATNG, CEGLLVEDCDIEEAGGDTIGPQLGIDLEG, PYELTISDCRFRKNGRGSVTAHT, STDVSIKGNKIINEGGSKEYGIDSVG, GNRIQITDNNIQGFKIGMMIRG, AEDVSISNNRIQDSDCIQIQV, SSDIKVSNNKGKGTTSAYAIKVMD, SNDVKFLNNTFSNLYGGLYCER, AVRIKLNDFLLSGKGYGIYWDK, MYNIRISDNQIYNCKAIIAIHLIG, and GSEHMVRGNEIMFNRDSDQGYGIYLNG.

This is SPbeta prophage-derived uncharacterized protein YorA (yorA) from Bacillus subtilis (strain 168).